We begin with the raw amino-acid sequence, 1131 residues long: DNA polymerase II large subunit (1131 aa).

It belongs to the archaeal DNA polymerase II family. As to quaternary structure, heterodimer of a large subunit and a small subunit.

The enzyme catalyses DNA(n) + a 2'-deoxyribonucleoside 5'-triphosphate = DNA(n+1) + diphosphate. It carries out the reaction Exonucleolytic cleavage in the 3'- to 5'-direction to yield nucleoside 5'-phosphates.. Functionally, possesses two activities: a DNA synthesis (polymerase) and an exonucleolytic activity that degrades single-stranded DNA in the 3'- to 5'-direction. Has a template-primer preference which is characteristic of a replicative DNA polymerase. The chain is DNA polymerase II large subunit from Methanococcus maripaludis (strain DSM 14266 / JCM 13030 / NBRC 101832 / S2 / LL).